The sequence spans 306 residues: Golgi to ER traffic protein 2 (306 aa).

Positions 1–18 are enriched in basic and acidic residues; it reads MSEISDAEKRRILREKRQ. The tract at residues 1 to 100 is disordered; sequence MSEISDAEKR…PPGSAEQQNG (100 aa). Over 1–172 the chain is Cytoplasmic; that stretch reads MSEISDAEKR…VEAHNIAVNK (172 aa). The span at 34–57 shows a compositional bias: polar residues; it reads TGQTENSFLSTESPLDSRESTYPA. Residues 68-77 show a composition bias toward basic and acidic residues; that stretch reads DSTKQMDELL. Positions 78–90 are enriched in low complexity; it reads AKATSKTTSKASS. Over residues 91–100 the composition is skewed to polar residues; sequence PPGSAEQQNG. The chain crosses the membrane as a helical span at residues 173–193; it reads LKSYTILVKWLFFLLPYLYYI. At 194-214 the chain is on the lumenal side; sequence THSARDPFQHNAVNYVLDRSN. The helical transmembrane segment at 215–234 threads the bilayer; it reads FFTVFTTFEIVALSVYYQLL. Residues 235-281 are Cytoplasmic-facing; sequence MSAEKSHNVNTLDNNSKILKLVSMVPPGLVPIPNLRGKVAQALQYWD. A helical transmembrane segment spans residues 282 to 302; the sequence is VVSMYLTDLCFAIVLAGLFQY. The Lumenal portion of the chain corresponds to 303 to 306; it reads YHSM.

Belongs to the GET2 family. Component of the Golgi to ER traffic (GET) complex, which is composed of GET1, GET2 and GET3. Within the complex, GET1 and GET2 form a heterotetramer which is stabilized by phosphatidylinositol binding and which binds to the GET3 homodimer.

It is found in the endoplasmic reticulum membrane. It localises to the golgi apparatus membrane. Required for the post-translational delivery of tail-anchored (TA) proteins to the endoplasmic reticulum. Together with GET1, acts as a membrane receptor for soluble GET3, which recognizes and selectively binds the transmembrane domain of TA proteins in the cytosol. The GET complex cooperates with the HDEL receptor ERD2 to mediate the ATP-dependent retrieval of resident ER proteins that contain a C-terminal H-D-E-L retention signal from the Golgi to the ER. This is Golgi to ER traffic protein 2 from Lachancea thermotolerans (strain ATCC 56472 / CBS 6340 / NRRL Y-8284) (Yeast).